Consider the following 1020-residue polypeptide: LLGL scribble cell polarity complex component 2 (1020 aa).

14 WD repeats span residues 36–69, 76–117, 132–169, 193–227, 233–264, 282–324, 332–364, 386–462, 506–581, 590–651, 710–766, 775–827, 832–884, and 898–921; these read SALG…FMGL, VTQV…IGRF, VTAV…ENNI, TLHE…VQHF, LESV…GEDP, AISK…KTHE, IIDF…VVDL, TCSH…YKLS, QKIH…FALV, TAIA…LRQS, VRTL…KEIQ, GLVV…VSSK, LTAV…VHYP, and VFTK…SLST. A disordered region spans residues 935–968; that stretch reads LQMRSKSPSSPVHRDLPDGVPTEHRNFKGDSEGY. Residues 946 to 965 show a composition bias toward basic and acidic residues; the sequence is VHRDLPDGVPTEHRNFKGDS.

The protein belongs to the WD repeat L(2)GL family. Phosphorylated.

The protein resides in the cytoplasm. It is found in the cytoskeleton. Functionally, essential for hemidesmosome formation and maintenance of the cytoskeleton elements as well as cellular morphology in the basal epidermis during development. Also involved in regulating growth of the basal epidermis. The protein is LLGL scribble cell polarity complex component 2 (llgl2) of Danio rerio (Zebrafish).